Consider the following 338-residue polypeptide: Limbic system-associated membrane protein (338 aa).

The signal sequence occupies residues 1 to 28 (MVGRVQPDRKQLPLVLLRLLCLLPTGLP). 3 consecutive Ig-like C2-type domains span residues 29–122 (VRSV…PKTS), 132–214 (PKIS…VKVT), and 219–304 (PTIT…ASLV). Asn-40 and Asn-66 each carry an N-linked (GlcNAc...) asparagine glycan. The cysteines at positions 53 and 111 are disulfide-linked. Tyr-94 is subject to Phosphotyrosine. Asn-136 and Asn-148 each carry an N-linked (GlcNAc...) asparagine glycan. 2 disulfides stabilise this stretch: Cys-153–Cys-197 and Cys-239–Cys-290. N-linked (GlcNAc...) asparagine glycans are attached at residues Asn-279, Asn-287, and Asn-300. Residue Asn-315 is the site of GPI-anchor amidated asparagine; alternate attachment. Asn-315 carries an N-linked (GlcNAc...) asparagine; alternate glycan. Residues 316-338 (GSISLAVPLWLLAASLFCLLSKC) constitute a propeptide, removed in mature form.

This sequence belongs to the immunoglobulin superfamily. IgLON family. Expressed mostly by neurons comprising limbic-associated cortical and subcortical regions that function in cognition, emotion, memory, and learning.

It is found in the cell membrane. In terms of biological role, mediates selective neuronal growth and axon targeting. Contributes to the guidance of developing axons and remodeling of mature circuits in the limbic system. Essential for normal growth of the hippocampal mossy fiber projection. The polypeptide is Limbic system-associated membrane protein (Lsamp) (Rattus norvegicus (Rat)).